The primary structure comprises 514 residues: Maturase K (514 aa).

This sequence belongs to the intron maturase 2 family. MatK subfamily.

Its subcellular location is the plastid. The protein localises to the chloroplast. In terms of biological role, usually encoded in the trnK tRNA gene intron. Probably assists in splicing its own and other chloroplast group II introns. This chain is Maturase K, found in Plantago argentea (Silver plantain).